The sequence spans 856 residues: Putative zinc protease C28F5.4 (856 aa).

H71 lines the Zn(2+) pocket. Catalysis depends on E74, which acts as the Proton acceptor. Zn(2+)-binding residues include H75 and E152.

It belongs to the peptidase M16 family.

This Caenorhabditis elegans protein is Putative zinc protease C28F5.4.